Consider the following 515-residue polypeptide: 2-isopropylmalate synthase (515 aa).

The 264-residue stretch at 5–268 folds into the Pyruvate carboxyltransferase domain; it reads VIIFDTTLRD…VCGIDATQIV (264 aa). Mn(2+) is bound by residues Asp14, His202, His204, and Asn239. The segment at 394 to 515 is regulatory domain; sequence KFISLSQHSE…QAKLNAQMTP (122 aa).

This sequence belongs to the alpha-IPM synthase/homocitrate synthase family. LeuA type 1 subfamily. As to quaternary structure, homodimer. The cofactor is Mn(2+).

Its subcellular location is the cytoplasm. The enzyme catalyses 3-methyl-2-oxobutanoate + acetyl-CoA + H2O = (2S)-2-isopropylmalate + CoA + H(+). It participates in amino-acid biosynthesis; L-leucine biosynthesis; L-leucine from 3-methyl-2-oxobutanoate: step 1/4. Its function is as follows. Catalyzes the condensation of the acetyl group of acetyl-CoA with 3-methyl-2-oxobutanoate (2-ketoisovalerate) to form 3-carboxy-3-hydroxy-4-methylpentanoate (2-isopropylmalate). The polypeptide is 2-isopropylmalate synthase (Polynucleobacter necessarius subsp. necessarius (strain STIR1)).